The sequence spans 565 residues: Deformed epidermal autoregulatory factor 1 homolog (565 aa).

Disordered regions lie at residues alanine 29–arginine 62 and glycine 162–glycine 189. Residues proline 169–leucine 181 are compositionally biased toward pro residues. At threonine 171 the chain carries Phosphothreonine. Residue serine 176 is modified to Phosphoserine. Threonine 179 bears the Phosphothreonine mark. The region spanning asparagine 193–asparagine 273 is the SAND domain. A Nuclear localization signal motif is present at residues lysine 301–lysine 316. Residues isoleucine 403–lysine 478 are interaction with LMO4. At threonine 432 the chain carries Phosphothreonine. Phosphoserine is present on residues serine 443 and serine 448. 8 residues coordinate Zn(2+): cysteine 504, cysteine 507, cysteine 515, cysteine 518, cysteine 524, cysteine 528, histidine 536, and cysteine 540. Residues cysteine 504–cysteine 540 form an MYND-type zinc finger.

As to quaternary structure, homodimer. Interacts with LMO4; LMO4 blocks export from nucleus. Interacts with LMO2 and CLIM2. May interact with the corepressors NCOR1 and NCRO2. Identified in a complex with XRCC5 and XRCC6. Interacts (via the SAND domain) with the DNA-PK complex subunit XRCC6; the interaction is direct and may be inhibited by DNA-binding. In terms of processing, may be phosphorylated by DNA-PK complex in a DNA independent manner (in vitro). In terms of tissue distribution, ubiquitous. Detected in brain, spleen, adrenal, lung, skeletal muscle, liver, kidney, and in developing germ cells in testis. In pituitary, restricted to hormone-secreting cell types.

It localises to the nucleus. Its subcellular location is the secreted. Transcription factor that binds to sequence with multiple copies of 5'-TTC[CG]G-3' present in its own promoter and that of the HNRPA2B1 gene. Down-regulates transcription of these genes. Binds to the retinoic acid response element (RARE) 5'-AGGGTTCACCGAAAGTTCA-3'. Activates the proenkephalin gene independently of promoter binding, probably through protein-protein interaction. When secreted, behaves as an inhibitor of cell proliferation, by arresting cells in the G0 or G1 phase. Regulates epithelial cell proliferation and side-branching in the mammary gland. Required for neural tube closure and skeletal patterning. Controls the expression of peripheral tissue antigens in pancreatic lymph nodes. Transcriptional activator of EIF4G3. May also involved in behavior. This is Deformed epidermal autoregulatory factor 1 homolog (Deaf1) from Rattus norvegicus (Rat).